We begin with the raw amino-acid sequence, 332 residues long: Mediator of RNA polymerase II transcription subunit 3 (332 aa).

2 disordered regions span residues 125–206 (EPVR…PGAT) and 221–242 (SPLNGISPSRKPAQPHHQTTPS). A compositionally biased stretch (low complexity) spans 132 to 143 (SPSYRRPSNRSS). The span at 144–153 (ADTPSSNAPT) shows a compositional bias: polar residues. 2 stretches are compositionally biased toward low complexity: residues 155–166 (SAAVVSGAALVA) and 184–200 (PSVSASVVPSANSSGPA).

Belongs to the Mediator complex subunit 3 family. In terms of assembly, component of the Mediator complex.

Its subcellular location is the nucleus. Its function is as follows. Component of the Mediator complex, a coactivator involved in regulated gene transcription of nearly all RNA polymerase II-dependent genes. Mediator functions as a bridge to convey information from gene-specific regulatory proteins to the basal RNA polymerase II transcription machinery. Mediator is recruited to promoters by direct interactions with regulatory proteins and serves as a scaffold for the assembly of a functional preinitiation complex with RNA polymerase II and the general transcription factors. The protein is Mediator of RNA polymerase II transcription subunit 3 (PGD1) of Eremothecium gossypii (strain ATCC 10895 / CBS 109.51 / FGSC 9923 / NRRL Y-1056) (Yeast).